The chain runs to 383 residues: Protein COS7 (383 aa).

The Cytoplasmic portion of the chain corresponds to Met-1–Glu-42. The chain crosses the membrane as a helical span at residues Ile-43–Trp-63. Residues Lys-64–Pro-72 lie on the Extracellular side of the membrane. A helical transmembrane segment spans residues Leu-73 to Leu-93. Residues Ser-94–Arg-232 lie on the Cytoplasmic side of the membrane. The helical transmembrane segment at Ile-233 to Gln-253 threads the bilayer. Residue His-254 is a topological domain, extracellular. The chain crosses the membrane as a helical span at residues Phe-255–Phe-275. Over Gln-276–Lys-383 the chain is Cytoplasmic.

Belongs to the DUP/COS family.

It localises to the membrane. This chain is Protein COS7 (COS7), found in Saccharomyces cerevisiae (strain ATCC 204508 / S288c) (Baker's yeast).